Reading from the N-terminus, the 208-residue chain is Small ribosomal subunit protein uS4 (208 aa).

Residues 98-160 (RRLDNVVYRM…SKNNVQIQRA (63 aa)) form the S4 RNA-binding domain.

The protein belongs to the universal ribosomal protein uS4 family. As to quaternary structure, part of the 30S ribosomal subunit. Contacts protein S5. The interaction surface between S4 and S5 is involved in control of translational fidelity.

In terms of biological role, one of the primary rRNA binding proteins, it binds directly to 16S rRNA where it nucleates assembly of the body of the 30S subunit. With S5 and S12 plays an important role in translational accuracy. In Nautilia profundicola (strain ATCC BAA-1463 / DSM 18972 / AmH), this protein is Small ribosomal subunit protein uS4.